The following is a 708-amino-acid chain: FACT complex subunit SSRP1 (708 aa).

The residue at position 2 (Ala2) is an N-acetylalanine. Lys90 is covalently cross-linked (Glycyl lysine isopeptide (Lys-Gly) (interchain with G-Cter in SUMO2)). Position 170 is a phosphothreonine (Thr170). Position 233 is an N6-acetyllysine (Lys233). Glycyl lysine isopeptide (Lys-Gly) (interchain with G-Cter in SUMO2) cross-links involve residues Lys296 and Lys364. At Lys413 the chain carries N6-acetyllysine. The residue at position 441 (Tyr441) is a Phosphotyrosine. Ser444 carries the post-translational modification Phosphoserine. At Tyr452 the chain carries Phosphotyrosine. Residues 458–708 (EEGKIREENA…SEDSASGSDE (251 aa)) are disordered. A compositionally biased stretch (acidic residues) spans 470–496 (SSDDSGEETDESFNPGEEEEDVAEEFD). Ser471 is modified (phosphoserine). Residues 497-507 (SNASASSSSNE) are compositionally biased toward low complexity. Ser510 carries the phosphoserine; by CK2 modification. Composition is skewed to basic and acidic residues over residues 512 to 546 (REEK…DPNA) and 577 to 624 (LSKK…SSKR). Lys542 carries the N6-acetyllysine modification. Positions 547–615 (PKRPMSAYML…EYEKAMKEYE (69 aa)) form a DNA-binding region, HMG box. Positions 625–634 (DKSKKKKKVK) are enriched in basic residues. The span at 643–659 (PSRGSSSKSSSRQLSDS) shows a compositional bias: low complexity. Position 657 is a phosphoserine; by CK2 (Ser657). 6 positions are modified to phosphoserine: Ser659, Ser667, Ser668, Ser671, Ser672, and Ser673. Residue Ser688 is modified to Phosphoserine; by CK2. The segment covering 695–708 (TPPSSEDSASGSDE) has biased composition (polar residues).

This sequence belongs to the SSRP1 family. In terms of assembly, interacts with MYOG (via C-terminal region). Component of the FACT complex, a stable heterodimer of SSRP1 and SUPT16H. Also a component of a CK2-SPT16-SSRP1 complex which forms following UV irradiation, composed of SSRP1, SUPT16H, CSNK2A1, CSNK2A2 and CSNK2B. Binds to histone H3-H4 tetramers, but not to intact nucleosomes. Identified in a centromere complex containing histones H2A, H2B and H4, and at least CENPA, CENPB, CENPC, CENPT, CENPN, HJURP, SUPT16H, SSRP1 and RSF1. Interacts with isoform gamma of TP63. Interacts with FYTTD1/UIF. Interacts with SRF. Interacts with NEK9. In terms of processing, phosphorylated by CK2 following UV but not gamma irradiation. Phosphorylation inhibits its DNA-binding activity. Post-translationally, ubiquitinated. Polyubiquitinated following caspase cleavage resulting in degradation of the N-terminal ubiquitinated part of the cleaved protein. Sumoylated.

It is found in the nucleus. It localises to the chromosome. Its subcellular location is the nucleolus. Its function is as follows. Component of the FACT complex, a general chromatin factor that acts to reorganize nucleosomes. The FACT complex is involved in multiple processes that require DNA as a template such as mRNA elongation, DNA replication and DNA repair. During transcription elongation the FACT complex acts as a histone chaperone that both destabilizes and restores nucleosomal structure. It facilitates the passage of RNA polymerase II and transcription by promoting the dissociation of one histone H2A-H2B dimer from the nucleosome, then subsequently promotes the reestablishment of the nucleosome following the passage of RNA polymerase II. The FACT complex is probably also involved in phosphorylation of 'Ser-392' of p53/TP53 via its association with CK2 (casein kinase II). Binds specifically to double-stranded DNA. Also acts as a transcriptional coactivator for p63/TP63. The protein is FACT complex subunit SSRP1 (Ssrp1) of Mus musculus (Mouse).